A 437-amino-acid polypeptide reads, in one-letter code: MEQKRTRNPNGRSTIYLGNDGYWHGRVTMGIGDDGKPDRRHVKRKDKDEVVEEVGKLERERDSGNVRKKGQPWTVERWLTHWVESIAPLTCRYKTMRGYQTAVYKHLIPGLGAHRLDRIQNHPEYFEKFYLRMIESGLKPATAHQVHRTARTAFGEAYKRGRIQRNPVSIAKAPRVEEEEVEPLEVEDMQLVIKAALERRNGVRYVIALALGTRQGESLALKWPRLNRQKRTLRITKALQRQTWKHGCSDPHRCGATYHKTEPCKAACKRHTRACPPPCPPACTEHARWCPQRTGGGLVEVDVKSRAGRRTVTLPDQLFDLILKHEKLQGAERELAGTEWHDGEWMFTQPNGKPIDPRQDLDEWKAILVEAGVREARLHDARHTAATVLLVLGVPDRVVMELMGWSSVTMKQRYMHVIDSVRNDVADRLNTYFWGTN.

Residues 73-158 (WTVERWLTHW…TARTAFGEAY (86 aa)) enclose the Core-binding (CB) domain. In terms of domain architecture, Tyr recombinase spans 179–428 (EEVEPLEVED…DSVRNDVADR (250 aa)). Active-site residues include Arg214, Lys245, His379, Arg382, and Trp405. Catalysis depends on Tyr414, which acts as the O-(3'-phospho-DNA)-tyrosine intermediate.

This sequence belongs to the 'phage' integrase family.

Is a recombinase (or integrase), catalyzing the cutting and rejoining of the recombining DNA molecules. The protein is Integrase (int) of Saccharopolyspora erythraea (Streptomyces erythraeus).